The primary structure comprises 401 residues: Probable E3 ubiquitin-protein ligase RHC2A (401 aa).

Residues T41 to S93 form a disordered region. Over residues A76–S93 the composition is skewed to polar residues. The segment at C201 to R242 adopts an RING-type; atypical zinc-finger fold.

The enzyme catalyses S-ubiquitinyl-[E2 ubiquitin-conjugating enzyme]-L-cysteine + [acceptor protein]-L-lysine = [E2 ubiquitin-conjugating enzyme]-L-cysteine + N(6)-ubiquitinyl-[acceptor protein]-L-lysine.. The protein operates within protein modification; protein ubiquitination. Probable E3 ubiquitin-protein ligase that may possess E3 ubiquitin ligase activity in vitro. This chain is Probable E3 ubiquitin-protein ligase RHC2A, found in Arabidopsis thaliana (Mouse-ear cress).